The following is a 208-amino-acid chain: NAD(P)H-quinone oxidoreductase subunit I (208 aa).

4Fe-4S ferredoxin-type domains lie at 55–84 and 95–124; these read GRIH…VDWV and RNYS…MTEE. Cys64, Cys67, Cys70, Cys74, Cys104, Cys107, Cys110, and Cys114 together coordinate [4Fe-4S] cluster.

This sequence belongs to the complex I 23 kDa subunit family. In terms of assembly, NDH-1 is composed of at least 11 different subunits. [4Fe-4S] cluster is required as a cofactor.

The protein localises to the cellular thylakoid membrane. The catalysed reaction is a plastoquinone + NADH + (n+1) H(+)(in) = a plastoquinol + NAD(+) + n H(+)(out). It carries out the reaction a plastoquinone + NADPH + (n+1) H(+)(in) = a plastoquinol + NADP(+) + n H(+)(out). Its function is as follows. NDH-1 shuttles electrons from an unknown electron donor, via FMN and iron-sulfur (Fe-S) centers, to quinones in the respiratory and/or the photosynthetic chain. The immediate electron acceptor for the enzyme in this species is believed to be plastoquinone. Couples the redox reaction to proton translocation, and thus conserves the redox energy in a proton gradient. The protein is NAD(P)H-quinone oxidoreductase subunit I of Prochlorococcus marinus subsp. pastoris (strain CCMP1986 / NIES-2087 / MED4).